The following is a 332-amino-acid chain: Receptor polysaccharide phosphotransferase WefC (332 aa).

It belongs to the stealth family.

The polypeptide is Receptor polysaccharide phosphotransferase WefC (wefC) (Streptococcus oralis).